Consider the following 907-residue polypeptide: Translation initiation factor IF-2 (907 aa).

Composition is skewed to basic and acidic residues over residues 223 to 235, 251 to 263, and 270 to 281; these read LAQRRQEEAKRAA, VAKEAPKPEEKNA, and GGKDWNDSDGKK. A disordered region spans residues 223-320; that stretch reads LAQRRQEEAK…ENQQHAFTAP (98 aa). One can recognise a tr-type G domain in the interval 407 to 576; sequence PRPPVVTVMG…LLQAEVLELK (170 aa). A G1 region spans residues 416-423; the sequence is GHVDHGKT. 416 to 423 contributes to the GTP binding site; it reads GHVDHGKT. Residues 441–445 form a G2 region; sequence GITQH. The segment at 462-465 is G3; the sequence is DTPG. Residues 462-466 and 516-519 contribute to the GTP site; these read DTPGH and NKID. The interval 516–519 is G4; the sequence is NKID. The tract at residues 552 to 554 is G5; sequence SAK.

It belongs to the TRAFAC class translation factor GTPase superfamily. Classic translation factor GTPase family. IF-2 subfamily.

It localises to the cytoplasm. One of the essential components for the initiation of protein synthesis. Protects formylmethionyl-tRNA from spontaneous hydrolysis and promotes its binding to the 30S ribosomal subunits. Also involved in the hydrolysis of GTP during the formation of the 70S ribosomal complex. This is Translation initiation factor IF-2 from Methylobacillus flagellatus (strain ATCC 51484 / DSM 6875 / VKM B-1610 / KT).